A 331-amino-acid polypeptide reads, in one-letter code: 7,8-didemethyl-8-hydroxy-5-deazariboflavin synthase (331 aa).

The Radical SAM core domain maps to 6–244 (ITFSKNAFLP…ADVAVQIPPN (239 aa)). [4Fe-4S] cluster is bound by residues Cys-20, Cys-24, and Cys-27.

It belongs to the radical SAM superfamily. CofG family. Consists of two subunits, CofG and CofH. [4Fe-4S] cluster is required as a cofactor.

The catalysed reaction is 5-amino-5-(4-hydroxybenzyl)-6-(D-ribitylimino)-5,6-dihydrouracil + S-adenosyl-L-methionine = 7,8-didemethyl-8-hydroxy-5-deazariboflavin + 5'-deoxyadenosine + L-methionine + NH4(+) + H(+). Its pathway is cofactor biosynthesis; coenzyme F0 biosynthesis. Functionally, catalyzes the radical-mediated synthesis of 7,8-didemethyl-8-hydroxy-5-deazariboflavin from 5-amino-5-(4-hydroxybenzyl)-6-(D-ribitylimino)-5,6-dihydrouracil. The protein is 7,8-didemethyl-8-hydroxy-5-deazariboflavin synthase of Methanoculleus marisnigri (strain ATCC 35101 / DSM 1498 / JR1).